A 1177-amino-acid polypeptide reads, in one-letter code: uncharacterized protein (1177 aa).

Residues 1-26 (MKKLLKKSKFWWFLLCGLSVSTILVA) form the signal peptide. Cys-27 carries the N-palmitoyl cysteine lipid modification. A lipid anchor (S-diacylglycerol cysteine) is attached at Cys-27.

This sequence belongs to the MG307/MG309/MG338 family.

The protein localises to the cell membrane. This is an uncharacterized protein from Mycoplasma genitalium (strain ATCC 33530 / DSM 19775 / NCTC 10195 / G37) (Mycoplasmoides genitalium).